A 629-amino-acid polypeptide reads, in one-letter code: RNA polymerase sigma factor RpoD (629 aa).

Residues 183 to 228 (HNGLDEDFSDEDDEEESSNADVEDNEDEEDNESESTSDSSDSDNSI) form a disordered region. The span at 187–228 (DEDFSDEDDEEESSNADVEDNEDEEDNESESTSDSSDSDNSI) shows a compositional bias: acidic residues. The interval 395–465 (MVEANLRLVI…TRSIADQART (71 aa)) is sigma-70 factor domain-2. The Interaction with polymerase core subunit RpoC motif lies at 419-422 (DLIQ). The sigma-70 factor domain-3 stretch occupies residues 474-550 (ETINKLNRIS…DSTLELPLDS (77 aa)). The tract at residues 563–616 (VLEGLTPREAKVLRMRFGIDMNTDHTLEEVGKQFDVTRERIRQIEAKALRKLRH) is sigma-70 factor domain-4. Residues 589–608 (LEEVGKQFDVTRERIRQIEA) constitute a DNA-binding region (H-T-H motif).

It belongs to the sigma-70 factor family. RpoD/SigA subfamily. As to quaternary structure, interacts transiently with the RNA polymerase catalytic core.

Its subcellular location is the cytoplasm. Functionally, sigma factors are initiation factors that promote the attachment of RNA polymerase to specific initiation sites and are then released. This sigma factor is the primary sigma factor during exponential growth. This Haemophilus influenzae (strain ATCC 51907 / DSM 11121 / KW20 / Rd) protein is RNA polymerase sigma factor RpoD.